A 470-amino-acid polypeptide reads, in one-letter code: 3-isopropylmalate dehydratase large subunit (470 aa).

3 residues coordinate [4Fe-4S] cluster: cysteine 349, cysteine 410, and cysteine 413.

It belongs to the aconitase/IPM isomerase family. LeuC type 1 subfamily. Heterodimer of LeuC and LeuD. [4Fe-4S] cluster is required as a cofactor.

The catalysed reaction is (2R,3S)-3-isopropylmalate = (2S)-2-isopropylmalate. The protein operates within amino-acid biosynthesis; L-leucine biosynthesis; L-leucine from 3-methyl-2-oxobutanoate: step 2/4. Functionally, catalyzes the isomerization between 2-isopropylmalate and 3-isopropylmalate, via the formation of 2-isopropylmaleate. This is 3-isopropylmalate dehydratase large subunit from Nitrosomonas europaea (strain ATCC 19718 / CIP 103999 / KCTC 2705 / NBRC 14298).